Consider the following 625-residue polypeptide: Probable potassium transport system protein Kup (625 aa).

Transmembrane regions (helical) follow at residues 13-33, 53-73, 103-123, 141-161, 172-192, 206-226, 250-270, 282-302, 340-360, 369-389, 400-420, and 422-442; these read TALA…LYAL, ILSI…VAIV, IYMI…GIIT, VFDP…FLVQ, FGPI…HSVI, AIQF…AVVL, WFFV…ALLL, LLVP…ATVI, IYVP…ILIF, AYGL…AVFI, VLLL…ATSL, and ILSG…ILMT.

The protein belongs to the HAK/KUP transporter (TC 2.A.72) family.

Its subcellular location is the cell inner membrane. The catalysed reaction is K(+)(in) + H(+)(in) = K(+)(out) + H(+)(out). In terms of biological role, transport of potassium into the cell. Likely operates as a K(+):H(+) symporter. The sequence is that of Probable potassium transport system protein Kup from Acinetobacter baumannii (strain AYE).